We begin with the raw amino-acid sequence, 410 residues long: Lysosome-associated membrane glycoprotein 2 (410 aa).

The N-terminal stretch at 1 to 28 is a signal peptide; it reads MVCFRLFPVPGSGLVLVCLVLGAVRSYA. The first lumenal domain stretch occupies residues 29–192; the sequence is LELNLTDSEN…STNEFLCDKD (164 aa). The Lumenal segment spans residues 29 to 375; sequence LELNLTDSEN…QDCSADDDNF (347 aa). N-linked (GlcNAc...) (polylactosaminoglycan) asparagine glycosylation is found at asparagine 32 and asparagine 38. A disulfide bridge links cysteine 41 with cysteine 79. Residues asparagine 49, asparagine 58, asparagine 75, asparagine 101, asparagine 123, and asparagine 179 are each glycosylated (N-linked (GlcNAc...) asparagine). Cysteine 153 and cysteine 189 are oxidised to a cystine. Positions 193–228 are hinge; sequence KTSTVAPTIHTTVPSPTTTPTPKEKPEAGTYSVNNG. Residue serine 195 is glycosylated (O-linked (GalNAc...) serine). 4 O-linked (GalNAc...) threonine glycosylation sites follow: threonine 196, threonine 200, threonine 203, and threonine 204. Over residues 199–213 the composition is skewed to low complexity; sequence PTIHTTVPSPTTTPT. Residues 199–221 form a disordered region; it reads PTIHTTVPSPTTTPTPKEKPEAG. Residue serine 207 is glycosylated (O-linked (GalNAc...) serine; partial). A glycan (O-linked (GalNAc...) threonine; partial) is linked at threonine 209. 2 O-linked (GalNAc...) threonine glycosylation sites follow: threonine 210 and threonine 211. Threonine 213 carries O-linked (GalNAc...) threonine; partial glycosylation. 5 N-linked (GlcNAc...) asparagine glycosylation sites follow: asparagine 229, asparagine 242, asparagine 257, asparagine 275, and asparagine 300. Residues 229–375 are second lumenal domain; sequence NDTCLLATMG…QDCSADDDNF (147 aa). Residues cysteine 232 and cysteine 265 are joined by a disulfide bond. An N-linked (GlcNAc...) (polylactosaminoglycan) asparagine glycan is attached at asparagine 307. Residues asparagine 317 and asparagine 356 are each glycosylated (N-linked (GlcNAc...) asparagine). Residues cysteine 331 and cysteine 368 are joined by a disulfide bond. Residues 376–399 form a helical membrane-spanning segment; the sequence is LVPIAVGAALAGVLILVLLAYFIG. Residues 400–410 are Cytoplasmic-facing; that stretch reads LKHHHAGYEQF. Residues 401 to 404 are important for binding and subsequent lysosomal degradation of target proteins; that stretch reads KHHH.

Belongs to the LAMP family. As to quaternary structure, monomer. Homodimer. Homotrimer. Forms large homooligomers. Interacts (via its cytoplasmic region) with HSPA8; HSPA8 mediates recruitment of proteins with a KFERQ motif to the surface of the lysosome for chaperone-mediated autophagy. Interacts with HSP90 in the lysosome lumen; this enhances LAMP2 stability. Interacts with MLLT11. Interacts with ABCB9. Interacts with FURIN. Interacts with CT55; this interaction may be important for LAMP2 protein stability. Interacts with TMEM175; inhibiting the proton channel activity of TMEM175. Forms a ternary complex with RAB7A and RUFY4 (via RUN domain); the interaction with RAB7A is mediated by RUFY4 (via RUN and coiled coil domains). (Microbial infection) Interacts with mumps virus protein F; this interaction promotes protein F cleavage by FURIN. Post-translationally, O- and N-glycosylated; some of the 16 N-linked glycans are polylactosaminoglycans. As to expression, isoform LAMP-2A is highly expressed in placenta, lung and liver, less in kidney and pancreas, low in brain and skeletal muscle. Isoform LAMP-2B is detected in spleen, thymus, prostate, testis, small intestine, colon, skeletal muscle, brain, placenta, lung, kidney, ovary and pancreas and liver. Isoform LAMP-2C is detected in small intestine, colon, heart, brain, skeletal muscle, and at lower levels in kidney and placenta.

It localises to the lysosome membrane. The protein resides in the endosome membrane. The protein localises to the cell membrane. It is found in the cytoplasmic vesicle. Its subcellular location is the autophagosome membrane. Its function is as follows. Lysosomal membrane glycoprotein which plays an important role in lysosome biogenesis, lysosomal pH regulation and autophagy. Acts as an important regulator of lysosomal lumen pH regulation by acting as a direct inhibitor of the proton channel TMEM175, facilitating lysosomal acidification for optimal hydrolase activity. Plays an important role in chaperone-mediated autophagy, a process that mediates lysosomal degradation of proteins in response to various stresses and as part of the normal turnover of proteins with a long biological half-live. Functions by binding target proteins, such as GAPDH, NLRP3 and MLLT11, and targeting them for lysosomal degradation. In the chaperone-mediated autophagy, acts downstream of chaperones, such as HSPA8/HSC70, which recognize and bind substrate proteins and mediate their recruitment to lysosomes, where target proteins bind LAMP2. Plays a role in lysosomal protein degradation in response to starvation. Required for the fusion of autophagosomes with lysosomes during autophagy. Cells that lack LAMP2 express normal levels of VAMP8, but fail to accumulate STX17 on autophagosomes, which is the most likely explanation for the lack of fusion between autophagosomes and lysosomes. Required for normal degradation of the contents of autophagosomes. Required for efficient MHC class II-mediated presentation of exogenous antigens via its function in lysosomal protein degradation; antigenic peptides generated by proteases in the endosomal/lysosomal compartment are captured by nascent MHC II subunits. Is not required for efficient MHC class II-mediated presentation of endogenous antigens. In terms of biological role, modulates chaperone-mediated autophagy. Decreases presentation of endogenous antigens by MHCII. Does not play a role in the presentation of exogenous and membrane-derived antigens by MHCII. Functionally, (Microbial infection) Supports the FURIN-mediated cleavage of mumps virus fusion protein F by interacting with both FURIN and the unprocessed form but not the processed form of the viral protein F. In Homo sapiens (Human), this protein is Lysosome-associated membrane glycoprotein 2 (LAMP2).